The following is a 231-amino-acid chain: (S)-2-haloacid dehalogenase 4A (231 aa).

The active-site Nucleophile is the Asp11. An (S)-2-haloacid-binding positions include 12–13 (AY), Arg42, and 119–120 (SN). An important for catalytic activity region spans residues 176–181 (SSNAWD).

The protein belongs to the HAD-like hydrolase superfamily. S-2-haloalkanoic acid dehalogenase family.

The enzyme catalyses an (S)-2-haloacid + H2O = a (2R)-2-hydroxycarboxylate + a halide anion + H(+). It catalyses the reaction (S)-2-chloropropanoate + H2O = (R)-lactate + chloride + H(+). Its function is as follows. Catalyzes the hydrolytic dehalogenation of small (S)-2-haloalkanoic acids to yield the corresponding (R)-2-hydroxyalkanoic acids. Acts on acids of short chain lengths, C(2) to C(4), with inversion of configuration at C-3. Active with 2-halogenated carboxylic acids and converts only the S-isomer (or L-isomer) of 2-chloropropionic acid with inversion of configuration to produce R-lactate (or D-isomer). This Burkholderia cepacia (Pseudomonas cepacia) protein is (S)-2-haloacid dehalogenase 4A.